The chain runs to 249 residues: Galactan endo-beta-1,3-galactanase (249 aa).

Residues Met-1–Ala-21 form the signal peptide. Residues Ser-34 to Thr-247 enclose the GH16 domain. N-linked (GlcNAc...) asparagine glycosylation is present at Asn-48. Glu-138 acts as the Nucleophile in catalysis. Glu-143 serves as the catalytic Proton donor. Asn-156 carries an N-linked (GlcNAc...) asparagine glycan.

The protein belongs to the glycosyl hydrolase 16 family. In terms of processing, N-glycosylated.

The catalysed reaction is The enzyme specifically hydrolyzes beta-1,3-galactan and beta-1,3-galactooligosaccharides.. Functionally, specifically hydrolyzes beta-1,3-galactan in an endo-fashion. Requires at least 3 contiguous beta-1,3-residues. This is Galactan endo-beta-1,3-galactanase (EN3GAL) from Flammulina velutipes (Agaricus velutipes).